A 288-amino-acid polypeptide reads, in one-letter code: Protein PXR1 (288 aa).

The region spanning 25–72 is the G-patch domain; the sequence is QSRFGHKHLMRFGWQPGQGLGTQPVQSMKTHIKVSIKDDNLGLGAKLK. Residues 147–258 are disordered; sequence SYSQMEKDSS…TSIPESVSTR (112 aa). Over residues 157-166 the composition is skewed to acidic residues; sequence SDEESDDDED. Basic residues-rich tracts occupy residues 169–185 and 195–214; these read KKHK…KKRK and KKKK…KDKK. Over residues 238–256 the composition is skewed to low complexity; it reads RTASIESSTSATSIPESVS.

It belongs to the PINX1 family.

The protein localises to the nucleus. Its subcellular location is the nucleolus. Functionally, involved in rRNA-processing at A0, A1 and A2 sites and negatively regulates telomerase. The sequence is that of Protein PXR1 (PXR1) from Candida glabrata (strain ATCC 2001 / BCRC 20586 / JCM 3761 / NBRC 0622 / NRRL Y-65 / CBS 138) (Yeast).